The primary structure comprises 189 residues: Protein seele (189 aa).

The signal sequence occupies residues 1–17 (MLTKALILFGLLALAQG). Residues 23-176 (REVKCHVCKA…EQASYCDESP (154 aa)) enclose the Saposin B-type domain. 3 disulfide bridges follow: Cys-27–Cys-172, Cys-30–Cys-165, and Cys-85–Cys-136. The Prevents secretion from ER signature appears at 186-189 (KEEL).

This sequence belongs to the canopy family.

Its subcellular location is the endoplasmic reticulum. Functionally, involved in embryonic dorsal-ventral patterning which is generated by a series of serine protease processing events where gd processes snk which cleaves ea which then processes spz into the activating ligand for the Toll receptor. Required during this process for the secretion of ea from the developing embryo into the perivitelline space and for ea processing. This Drosophila melanogaster (Fruit fly) protein is Protein seele.